Reading from the N-terminus, the 413-residue chain is Aspartate kinase (413 aa).

ACT domains lie at 267–341 (LTIR…GDTK) and 347–413 (IVGV…RQGE).

This sequence belongs to the aspartokinase family. In terms of assembly, homotrimer. In the presence of inhibitory amino acids the Stokes radius of the protein increases, suggesting its oligomeric state may change.

The protein resides in the cytoplasm. It catalyses the reaction L-aspartate + ATP = 4-phospho-L-aspartate + ADP. The protein operates within amino-acid biosynthesis; L-lysine biosynthesis via DAP pathway; (S)-tetrahydrodipicolinate from L-aspartate: step 1/4. It participates in amino-acid biosynthesis; L-methionine biosynthesis via de novo pathway; L-homoserine from L-aspartate: step 1/3. Its pathway is amino-acid biosynthesis; L-threonine biosynthesis; L-threonine from L-aspartate: step 1/5. Its activity is regulated as follows. Activated by L-lysine, L-methionine, and L-isoleucine. L-threonine, at low concentrations, is a mild activator and has a weak inhibitory effect only at concentrations over 10 mM. Strongly feedback inhibited by the concerted combination of L-lysine and L-threonine and slightly feedback inhibited by the concerted combination of L-threonine and L-methionine. Activated by the combination of L-methionine and L-lysine, L-methionine and L-isoleucine and L-lysine and L-isoleucine. Its function is as follows. Involved in the biosynthesis of L-aspartate-beta-semialdehyde which is a central intermediate in the biosynthesis of different amino acids (L-lysine, L-methionine, L-threonine). Catalyzes the phosphorylation of the beta-carboxyl group of L-aspartate to yield 4-phospho-L-aspartate. The chain is Aspartate kinase from Pseudomonas fluorescens (strain SBW25).